A 400-amino-acid chain; its full sequence is CinA-like protein (400 aa).

Belongs to the CinA family.

This Shigella flexneri protein is CinA-like protein.